A 153-amino-acid chain; its full sequence is SsrA-binding protein (153 aa).

Belongs to the SmpB family.

The protein localises to the cytoplasm. Functionally, required for rescue of stalled ribosomes mediated by trans-translation. Binds to transfer-messenger RNA (tmRNA), required for stable association of tmRNA with ribosomes. tmRNA and SmpB together mimic tRNA shape, replacing the anticodon stem-loop with SmpB. tmRNA is encoded by the ssrA gene; the 2 termini fold to resemble tRNA(Ala) and it encodes a 'tag peptide', a short internal open reading frame. During trans-translation Ala-aminoacylated tmRNA acts like a tRNA, entering the A-site of stalled ribosomes, displacing the stalled mRNA. The ribosome then switches to translate the ORF on the tmRNA; the nascent peptide is terminated with the 'tag peptide' encoded by the tmRNA and targeted for degradation. The ribosome is freed to recommence translation, which seems to be the essential function of trans-translation. In Orientia tsutsugamushi (strain Ikeda) (Rickettsia tsutsugamushi), this protein is SsrA-binding protein.